Reading from the N-terminus, the 336-residue chain is UPF0284 protein Pcal_1534 (336 aa).

The protein belongs to the UPF0284 family.

This chain is UPF0284 protein Pcal_1534, found in Pyrobaculum calidifontis (strain DSM 21063 / JCM 11548 / VA1).